A 201-amino-acid chain; its full sequence is Probable nicotinate-nucleotide adenylyltransferase (201 aa).

It belongs to the NadD family.

The catalysed reaction is nicotinate beta-D-ribonucleotide + ATP + H(+) = deamido-NAD(+) + diphosphate. It participates in cofactor biosynthesis; NAD(+) biosynthesis; deamido-NAD(+) from nicotinate D-ribonucleotide: step 1/1. Its function is as follows. Catalyzes the reversible adenylation of nicotinate mononucleotide (NaMN) to nicotinic acid adenine dinucleotide (NaAD). This chain is Probable nicotinate-nucleotide adenylyltransferase, found in Carboxydothermus hydrogenoformans (strain ATCC BAA-161 / DSM 6008 / Z-2901).